Reading from the N-terminus, the 113-residue chain is U11-theraphotoxin-Hhn1g (113 aa).

The signal sequence occupies residues 1–21 (MNTVRVTFLLVFVLAVSLGQA). Residues 22-74 (DKDENRMEMQEKTEQGKSYLDFAENLLLQKLEELEAKLLEEDSEESRNSRQKR) constitute a propeptide that is removed on maturation. The segment at 61–83 (EEDSEESRNSRQKRCIGEGVPCD) is disordered. Disulfide bonds link cysteine 75-cysteine 90, cysteine 82-cysteine 95, and cysteine 89-cysteine 110.

The protein belongs to the neurotoxin 14 (magi-1) family. 01 (HNTX-16) subfamily. Expressed by the venom gland.

Its subcellular location is the secreted. Functionally, probable ion channel inhibitor. In Cyriopagopus hainanus (Chinese bird spider), this protein is U11-theraphotoxin-Hhn1g.